The chain runs to 101 residues: ATP-dependent Clp protease adapter protein ClpS (101 aa).

The protein belongs to the ClpS family. Binds to the N-terminal domain of the chaperone ClpA.

In terms of biological role, involved in the modulation of the specificity of the ClpAP-mediated ATP-dependent protein degradation. The polypeptide is ATP-dependent Clp protease adapter protein ClpS (Corynebacterium efficiens (strain DSM 44549 / YS-314 / AJ 12310 / JCM 11189 / NBRC 100395)).